A 1342-amino-acid chain; its full sequence is MVNSYTEKKRIRKDFGKRDQVLETPYLLSIQLDSFKQFLDADPEGAYGLEAAFRSVFPITSYSGTAELQYVSYRLGEPVFDVKECQIRGVTYSAPLRVKLRLVLFDKEAAAGTVKEIKEQEVYMGEIPLMTDNGTFVINGTERVIVSQLHRSPGVFFDHDKGKTHSSGKVLYNARVIPYRGSWLDFEFDAKDNLFVRIDRRRKLPATIILRALEFTTEEILTTFFETIKFEIKDGKVLMELVPERLRGETATFDIVAGGDVVVEKGRRITARHIRQLEKAGISQIEVPVEYVVGKISARDYVNPQTGEVMINANTALSLEAIANLSQAGFKQFEVLFTNELDHGSYISETLRIDSSTNRLEALVEIYRMMRPGEPPTKDAAEQLFENLFFSADRYDLSTVGRMKFNSRLARPDHIGSGILSQDDIVDVMKQLIAIRNGKDDVDDIDHLGNRRIRSVGEMAENQFRVGLVRVERAVKERLSLGDLDAIQPQDLINAKPISAAVKEFFGSSQLSQFMDQNNPLSEITHKRRISALGPGGLTRERAGFEVRDVHPTHYGRLCPIETPEGPNIGLINSLAVYSRTNEYGFLETPYRKVIDGVITDEVDYLSAIEEGNFVIAQANANVDADARLKDELIPCRHKGESTFMNAEQIQYMDVSPQQVVSVAASLIPFLEHDDANRALMGSNMQRQAVPTLRADKPLVGTGMERAVAVDSGVTVVAKRGGTIDYVDASRIVVKVNEDELLPGEAGIDIYNLTKYTRSNQNTCINQRPCVSVGEPVMLGDVLADGPSTDLGELALGQNMRVAFMPWNGYNFEDSILVSERVVQEDRLTTIHIQELSCIARDTKLGPEEITADIPNVGEAALSKLDESGIVYVGAEVKGGDILVGKVTPKGETQLTPEEKLLRAIFGEKASDVKDSSLRVPNGVYGTVIDVQVFTRDGVEKDKRAKEVEDMQLRDAKKDLTEEFKILEDGIFGRARSLLIANGFGEDRLSKLDRKRWLEQSLDDEGKQVELEQIAEQHIALKEEFDRKFEAKRQKIIQGDDLAPGVLKIVKVYLAVKRRIQPGDKMAGRHGNKGVISKICPVEDMPYDDEGNPVDIVLNPLGVPSRMNIGQILEVHLGLAAKGIGEKIDRMVKEQRELAELREFLQRVYDLGGSDQQQIDIATLSDDDVRTLVQNLRKGLPVATPVFDGAKESEIKELLKLADKPESGQITLFDGRTGMPFERVVTVGYMYMLKLNHLVDDKMHARSTGSYSLVTQQPLGGKAQFGGQRFGEMEVWALEAYGAAYTLQEMLTVKSDDVNGRTKMYKNIVDGDHRMEPGIPESFNVLLKEIRSLGINIELEEE.

This sequence belongs to the RNA polymerase beta chain family. In terms of assembly, the RNAP catalytic core consists of 2 alpha, 1 beta, 1 beta' and 1 omega subunit. When a sigma factor is associated with the core the holoenzyme is formed, which can initiate transcription.

It catalyses the reaction RNA(n) + a ribonucleoside 5'-triphosphate = RNA(n+1) + diphosphate. Its function is as follows. DNA-dependent RNA polymerase catalyzes the transcription of DNA into RNA using the four ribonucleoside triphosphates as substrates. This chain is DNA-directed RNA polymerase subunit beta, found in Tolumonas auensis (strain DSM 9187 / NBRC 110442 / TA 4).